Consider the following 638-residue polypeptide: E3 ubiquitin-protein ligase TRIM47 (638 aa).

M1 is modified (N-acetylmethionine). The RING-type zinc finger occupies 9–58 (CPICLEPLREPVTLPCGHNFCLACLGALWPHRGASGAGGPGGAARCPLCQ). At T72 the chain carries Phosphothreonine. The interval 79–119 (LRQGSGPGSGPGPAPALAPEPSAPSALPSVPEPSAPCAPEP) is disordered. Pro residues-rich tracts occupy residues 88–100 (GPGP…PEPS) and 108–119 (VPEPSAPCAPEP). Residues 177–217 (LEESLCPRHLRPLERYCRAERVCLCEACAAQEHRGHELVPL) form a B box-type zinc finger. 4 residues coordinate Zn(2+): C182, H185, C204, and H209. Positions 296–324 (MLGRSQGDLRRQEEQRSRLSRARQNLSQV) form a coiled coil. 2 disordered regions span residues 300-322 (SQGD…QNLS) and 384-411 (LRGP…LEST). Residues 302–312 (GDLRRQEEQRS) show a composition bias toward basic and acidic residues. The B30.2/SPRY domain occupies 410-631 (STNLLESEAP…LQIGPLKKSC (222 aa)). S461 bears the Phosphoserine mark. R582 is subject to Omega-N-methylarginine. S588 carries the phosphoserine modification.

It belongs to the TRIM/RBCC family. Low expression in most tissues. Higher expression in kidney tubular cells. Overexpressed in astrocytoma tumor cells.

The protein localises to the cytoplasm. It is found in the nucleus. It carries out the reaction S-ubiquitinyl-[E2 ubiquitin-conjugating enzyme]-L-cysteine + [acceptor protein]-L-lysine = [E2 ubiquitin-conjugating enzyme]-L-cysteine + N(6)-ubiquitinyl-[acceptor protein]-L-lysine.. It participates in protein modification; protein ubiquitination. In terms of biological role, E3 ubiquitin-protein ligase that mediates the ubiquitination and proteasomal degradation of CYLD. This Homo sapiens (Human) protein is E3 ubiquitin-protein ligase TRIM47.